A 174-amino-acid chain; its full sequence is DNA endonuclease I-HmuI (174 aa).

This is DNA endonuclease I-HmuI from Bacillus subtilis (Bacteriophage SP01).